The sequence spans 424 residues: Delta(14)-sterol reductase erg24 (424 aa).

2 helical membrane-spanning segments follow: residues 19 to 39 (IGALGVTVLTTVVSFGSFYIC) and 112 to 132 (LILGVVCTSIYLLGASCMEFI). NADP(+) is bound by residues Lys-317, Arg-321, Leu-344, Trp-349, and 356–357 (NY). The chain crosses the membrane as a helical span at residues 370-390 (PAGFGSPIPYFYVAYFGVLLV). NADP(+) is bound by residues Asp-396, 400-404 (CRVKY), and Tyr-411.

Belongs to the ERG4/ERG24 family.

It localises to the endoplasmic reticulum membrane. The enzyme catalyses 4,4-dimethyl-5alpha-cholesta-8,24-dien-3beta-ol + NADP(+) = 4,4-dimethyl-5alpha-cholesta-8,14,24-trien-3beta-ol + NADPH + H(+). Its pathway is steroid biosynthesis; zymosterol biosynthesis; zymosterol from lanosterol: step 2/6. The protein operates within steroid metabolism; ergosterol biosynthesis. Delta(14)-sterol reductase; part of the third module of ergosterol biosynthesis pathway that includes by the late steps of the pathway. Erg24 reduces the C14=C15 double bond of 4,4-dimethyl-cholesta-8,14,24-trienol to produce 4,4-dimethyl-cholesta-8,24-dienol. The third module or late pathway involves the ergosterol synthesis itself through consecutive reactions that mainly occur in the endoplasmic reticulum (ER) membrane. Firstly, the squalene synthase erg9 catalyzes the condensation of 2 farnesyl pyrophosphate moieties to form squalene, which is the precursor of all steroids. Secondly, squalene is converted into lanosterol by the consecutive action of the squalene epoxidase erg1 and the lanosterol synthase erg7. The lanosterol 14-alpha-demethylase erg11/cyp1 catalyzes C14-demethylation of lanosterol to produce 4,4'-dimethyl cholesta-8,14,24-triene-3-beta-ol. In the next steps, a complex process involving various demethylation, reduction and desaturation reactions catalyzed by the C-14 reductase erg24 and the C-4 demethylation complex erg25-erg26-erg27 leads to the production of zymosterol. Erg28 likely functions in the C-4 demethylation complex reaction by tethering erg26 and Erg27 to the endoplasmic reticulum or to facilitate interaction between these proteins. Then, the sterol 24-C-methyltransferase erg6 catalyzes the methyl transfer from S-adenosyl-methionine to the C-24 of zymosterol to form fecosterol. The C-8 sterol isomerase erg2 catalyzes the reaction which results in unsaturation at C-7 in the B ring of sterols and thus converts fecosterol to episterol. The sterol-C5-desaturases erg31 and erg32 then catalyze the introduction of a C-5 double bond in the B ring to produce 5-dehydroepisterol. The C-22 sterol desaturase erg5 further converts 5-dehydroepisterol into ergosta-5,7,22,24(28)-tetraen-3beta-ol by forming the C-22(23) double bond in the sterol side chain. Finally, ergosta-5,7,22,24(28)-tetraen-3beta-ol is substrate of the C-24(28) sterol reductase erg4 to produce ergosterol. In the genus Schizosaccharomyces, a second route exists between lanosterol and fecosterol, via the methylation of lanosterol to eburicol by erg6, followed by C14-demethylation by erg11/cyp1 and C4-demethylation by the demethylation complex erg25-erg26-erg27. This is Delta(14)-sterol reductase erg24 from Schizosaccharomyces pombe (strain 972 / ATCC 24843) (Fission yeast).